The chain runs to 147 residues: Ubiquitin-conjugating enzyme E2 D4 (147 aa).

Residues 1 to 147 (MALKRIQKEL…AREWTQKYAM (147 aa)) enclose the UBC core domain. C85 functions as the Glycyl thioester intermediate in the catalytic mechanism.

It belongs to the ubiquitin-conjugating enzyme family. As to quaternary structure, interacts with map3k10/mlk2. In terms of tissue distribution, at embryonic stages 28 to 35, expressed in the somites, eye primordia, otic vesicle and branchial arches. By stage 35, also weakly expressed in the pronephros.

It carries out the reaction S-ubiquitinyl-[E1 ubiquitin-activating enzyme]-L-cysteine + [E2 ubiquitin-conjugating enzyme]-L-cysteine = [E1 ubiquitin-activating enzyme]-L-cysteine + S-ubiquitinyl-[E2 ubiquitin-conjugating enzyme]-L-cysteine.. It participates in protein modification; protein ubiquitination. Its function is as follows. Catalyzes the covalent attachment of ubiquitin to other proteins. Regulates pronephros development, possibly by promoting ubiquitination and thus inactivation or degradation of map3k10/mlk2. This Xenopus laevis (African clawed frog) protein is Ubiquitin-conjugating enzyme E2 D4 (ube2d4).